The chain runs to 295 residues: Protoheme IX farnesyltransferase (295 aa).

Transmembrane regions (helical) follow at residues 31–51 (GLVM…IGAA), 54–74 (VLTV…NCYL), 98–118 (FVAL…LSLA), 121–141 (GLTA…YTPM), 147–167 (TALF…WTSV), 173–193 (AGGL…FLAI), 220–240 (LWMA…VPLG), 245–265 (GYAI…ISGI), and 273–293 (ARTF…ALFL).

This sequence belongs to the UbiA prenyltransferase family. Protoheme IX farnesyltransferase subfamily.

The protein localises to the cell inner membrane. The enzyme catalyses heme b + (2E,6E)-farnesyl diphosphate + H2O = Fe(II)-heme o + diphosphate. The protein operates within porphyrin-containing compound metabolism; heme O biosynthesis; heme O from protoheme: step 1/1. Converts heme B (protoheme IX) to heme O by substitution of the vinyl group on carbon 2 of heme B porphyrin ring with a hydroxyethyl farnesyl side group. The sequence is that of Protoheme IX farnesyltransferase from Anaeromyxobacter dehalogenans (strain 2CP-C).